Consider the following 409-residue polypeptide: FADH(2)-dependent resorcinol hydroxylase, oxygenase component (409 aa).

Belongs to the HpaH/HsaA monooxygenase family. The FADH(2)-dependent resorcinol hydroxylase is composed of two subunits, GraA (the oxygenase component) and GraD (the reductase component). Both subunits are required for activity.

It carries out the reaction resorcinol + FADH2 + O2 = benzene-1,2,4-triol + FAD + H2O + H(+). It functions in the pathway aromatic compound metabolism. Functionally, involved in the gamma-resorcylate (2,6-dihydroxybenzoate) catabolism. Oxygenase component of the resorcinol hydroxylase, which catalyzes the FADH(2)-dependent conversion of resorcinol to hydroxyquinol. This chain is FADH(2)-dependent resorcinol hydroxylase, oxygenase component, found in Rhizobium sp. (strain MTP-10005).